The chain runs to 246 residues: 3-deoxy-manno-octulosonate cytidylyltransferase (246 aa).

It belongs to the KdsB family.

It is found in the cytoplasm. The enzyme catalyses 3-deoxy-alpha-D-manno-oct-2-ulosonate + CTP = CMP-3-deoxy-beta-D-manno-octulosonate + diphosphate. It participates in nucleotide-sugar biosynthesis; CMP-3-deoxy-D-manno-octulosonate biosynthesis; CMP-3-deoxy-D-manno-octulosonate from 3-deoxy-D-manno-octulosonate and CTP: step 1/1. It functions in the pathway bacterial outer membrane biogenesis; lipopolysaccharide biosynthesis. Its function is as follows. Activates KDO (a required 8-carbon sugar) for incorporation into bacterial lipopolysaccharide in Gram-negative bacteria. The chain is 3-deoxy-manno-octulosonate cytidylyltransferase from Rickettsia massiliae (strain Mtu5).